The following is a 348-amino-acid chain: MKLSDFSFVLPENLIAKYPTQQRTASRLLHLDGKNGKVEHTMFADMLKFVEPGDLLVFNNTRVIPARLLGKKETGGQVEVLIERITSDTTALAHVRASKAPKPGTKLILEEKVNVTVTGRDDALFILQFDHDETVLTLLEAHGHMPLPPYIDRPDENSDKERYQTVYNEKPGAVAAPTAGLHFDDSILNALKEKGVNLAFVTLHVGAGTFQPVRVDNIQEHKMHAEFAEVPQDVVDAVLNTKANGKRVIAVGTTSVRSLESAAKASAERGDEQIIAPFNEDTEIFIYPGFEFKVVDAMFTNFHLPESTLMMLISAFAGKENVMNAYQEAIAKEYRFFSYGDAMFIERA.

It belongs to the QueA family. Monomer.

The protein localises to the cytoplasm. It carries out the reaction 7-aminomethyl-7-carbaguanosine(34) in tRNA + S-adenosyl-L-methionine = epoxyqueuosine(34) in tRNA + adenine + L-methionine + 2 H(+). It functions in the pathway tRNA modification; tRNA-queuosine biosynthesis. Its function is as follows. Transfers and isomerizes the ribose moiety from AdoMet to the 7-aminomethyl group of 7-deazaguanine (preQ1-tRNA) to give epoxyqueuosine (oQ-tRNA). The chain is S-adenosylmethionine:tRNA ribosyltransferase-isomerase from Alteromonas mediterranea (strain DSM 17117 / CIP 110805 / LMG 28347 / Deep ecotype).